A 158-amino-acid chain; its full sequence is Cyclic pyranopterin monophosphate synthase (158 aa).

Residues 76-78 (LCH) and 114-115 (ME) each bind substrate. The active site involves Asp129.

It belongs to the MoaC family. As to quaternary structure, homohexamer; trimer of dimers.

The catalysed reaction is (8S)-3',8-cyclo-7,8-dihydroguanosine 5'-triphosphate = cyclic pyranopterin phosphate + diphosphate. It participates in cofactor biosynthesis; molybdopterin biosynthesis. In terms of biological role, catalyzes the conversion of (8S)-3',8-cyclo-7,8-dihydroguanosine 5'-triphosphate to cyclic pyranopterin monophosphate (cPMP). This is Cyclic pyranopterin monophosphate synthase from Shewanella sediminis (strain HAW-EB3).